Reading from the N-terminus, the 318-residue chain is Transaldolase (318 aa).

Lys-132 functions as the Schiff-base intermediate with substrate in the catalytic mechanism.

This sequence belongs to the transaldolase family. Type 1 subfamily. In terms of assembly, homodimer.

It is found in the cytoplasm. The enzyme catalyses D-sedoheptulose 7-phosphate + D-glyceraldehyde 3-phosphate = D-erythrose 4-phosphate + beta-D-fructose 6-phosphate. It participates in carbohydrate degradation; pentose phosphate pathway; D-glyceraldehyde 3-phosphate and beta-D-fructose 6-phosphate from D-ribose 5-phosphate and D-xylulose 5-phosphate (non-oxidative stage): step 2/3. Its function is as follows. Transaldolase is important for the balance of metabolites in the pentose-phosphate pathway. The chain is Transaldolase from Shewanella oneidensis (strain ATCC 700550 / JCM 31522 / CIP 106686 / LMG 19005 / NCIMB 14063 / MR-1).